A 625-amino-acid polypeptide reads, in one-letter code: MAU2 chromatid cohesion factor homolog (625 aa).

TPR repeat units follow at residues 96–129 (FDTASLLAQLHLKTEQSSHAKAMLRRAVELSQNN), 451–484 (GGFYYVQGLHAFHKNSFHEAKRFLRETLKMANAE), and 491–524 (SCSLVLLSHVFLSIGNSKESMNMVTPAMQLASKI). Over residues 600–611 (TVPTTETSTSAL) the composition is skewed to polar residues. A disordered region spans residues 600-625 (TVPTTETSTSALQQPQQPAAQFGQFY). Positions 612–625 (QQPQQPAAQFGQFY) are enriched in low complexity.

This sequence belongs to the SCC4/mau-2 family. Interacts with Nipped-B to form the cohesin loading complex.

It localises to the nucleus. The protein localises to the nucleoplasm. Required for association of the cohesin complex with chromatin during interphase. Plays a role in sister chromatid cohesion and normal progression through prometaphase. The sequence is that of MAU2 chromatid cohesion factor homolog from Drosophila mojavensis (Fruit fly).